A 228-amino-acid polypeptide reads, in one-letter code: Cytidylate kinase (228 aa).

Position 17–25 (17–25 (GPSASGKGT)) interacts with ATP.

The protein belongs to the cytidylate kinase family. Type 1 subfamily.

The protein localises to the cytoplasm. The enzyme catalyses CMP + ATP = CDP + ADP. The catalysed reaction is dCMP + ATP = dCDP + ADP. This Paraburkholderia phytofirmans (strain DSM 17436 / LMG 22146 / PsJN) (Burkholderia phytofirmans) protein is Cytidylate kinase.